The sequence spans 230 residues: Type II restriction enzyme NlaIII (230 aa).

It catalyses the reaction Endonucleolytic cleavage of DNA to give specific double-stranded fragments with terminal 5'-phosphates.. Functionally, a P subtype restriction enzyme that recognizes the double-stranded sequence 5'-CATG-3' and cleaves after G-4. The chain is Type II restriction enzyme NlaIII (nlaIIIR) from Neisseria lactamica.